The chain runs to 382 residues: Protein arginine N-methyltransferase 2 (382 aa).

2 ANK repeats span residues 22 to 46 (AAQT…FQDD) and 48 to 80 (LGWS…AVDK). One can recognise an RMT2 domain in the interval 134 to 382 (KTSAGDNLVF…RLPIAKMSLI (249 aa)). Residues F143, M177, 205 to 210 (FGLGIV), 228 to 230 (EAH), 255 to 256 (WQ), and D284 each bind S-adenosyl-L-methionine.

It belongs to the class I-like SAM-binding methyltransferase superfamily. RMT2 methyltransferase family. As to quaternary structure, monomer.

The protein localises to the cytoplasm. The protein resides in the nucleus. Its function is as follows. S-adenosyl-L-methionine-dependent protein-arginine N-methyltransferase that methylates the delta-nitrogen atom of arginine residues to form N5-methylarginine (type IV) in target proteins. Monomethylates ribosomal protein L12. The chain is Protein arginine N-methyltransferase 2 from Cryptococcus neoformans var. neoformans serotype D (strain JEC21 / ATCC MYA-565) (Filobasidiella neoformans).